A 140-amino-acid polypeptide reads, in one-letter code: Histone H2B (140 aa).

The span at 1–10 shows a compositional bias: basic and acidic residues; the sequence is MPPKAAEKKP. Residues 1–48 are disordered; sequence MPPKAAEKKPSTGGKAPAGKAPAEKKEAGKKTAAAASGDKKKRGKTRK. Lys8 and Lys9 each carry N6-acetyllysine; alternate. Glycyl lysine isopeptide (Lys-Gly) (interchain with G-Cter in SUMO); alternate cross-links involve residues Lys8 and Lys9. The segment covering 11-21 has biased composition (low complexity); that stretch reads STGGKAPAGKA. Lys15 is subject to N6-acetyllysine. The residue at position 25 (Lys25) is an N6-acetyllysine; alternate. Lys25 participates in a covalent cross-link: Glycyl lysine isopeptide (Lys-Gly) (interchain with G-Cter in SUMO); alternate. Lys26 is covalently cross-linked (Glycyl lysine isopeptide (Lys-Gly) (interchain with G-Cter in SUMO)). A Glycyl lysine isopeptide (Lys-Gly) (interchain with G-Cter in ubiquitin) cross-link involves residue Lys134.

It belongs to the histone H2B family. As to quaternary structure, the nucleosome is a histone octamer containing two molecules each of H2A, H2B, H3 and H4 assembled in one H3-H4 heterotetramer and two H2A-H2B heterodimers. The octamer wraps approximately 147 bp of DNA. Post-translationally, monoubiquitinated by the ubc2-bre1 complex to form H2BK123ub1. H2BK123ub1 gives a specific tag for epigenetic transcriptional activation and is also prerequisite for H3K4me and H3K79me formation. H2BK123ub1 also modulates the formation of double-strand breaks during meiosis and is a prerequisite for DNA-damage checkpoint activation. Acetylated by gcn5 to form H2BK11ac and H2BK16ac. H2BK16ac can also be formed by esa1. Acetylation of N-terminal lysines and particularly formation of H2BK11acK16ac has a positive effect on transcription. In terms of processing, sumoylation to form H2BK6su or H2BK7su, and probably also H2BK16su or H2BK17su, occurs preferentially near the telomeres and represses gene transcription.

It is found in the nucleus. It localises to the chromosome. Functionally, core component of nucleosome. Nucleosomes wrap and compact DNA into chromatin, limiting DNA accessibility to the cellular machineries which require DNA as a template. Histones thereby play a central role in transcription regulation, DNA repair, DNA replication and chromosomal stability. DNA accessibility is regulated via a complex set of post-translational modifications of histones, also called histone code, and nucleosome remodeling. This chain is Histone H2B (htb1), found in Aspergillus clavatus (strain ATCC 1007 / CBS 513.65 / DSM 816 / NCTC 3887 / NRRL 1 / QM 1276 / 107).